Reading from the N-terminus, the 238-residue chain is 1-(5-phosphoribosyl)-5-[(5-phosphoribosylamino)methylideneamino] imidazole-4-carboxamide isomerase (238 aa).

D8 functions as the Proton acceptor in the catalytic mechanism. D129 (proton donor) is an active-site residue.

This sequence belongs to the HisA/HisF family.

The protein localises to the cytoplasm. It catalyses the reaction 1-(5-phospho-beta-D-ribosyl)-5-[(5-phospho-beta-D-ribosylamino)methylideneamino]imidazole-4-carboxamide = 5-[(5-phospho-1-deoxy-D-ribulos-1-ylimino)methylamino]-1-(5-phospho-beta-D-ribosyl)imidazole-4-carboxamide. The protein operates within amino-acid biosynthesis; L-histidine biosynthesis; L-histidine from 5-phospho-alpha-D-ribose 1-diphosphate: step 4/9. The chain is 1-(5-phosphoribosyl)-5-[(5-phosphoribosylamino)methylideneamino] imidazole-4-carboxamide isomerase from Clostridium novyi (strain NT).